Consider the following 348-residue polypeptide: Phosphoribosylformylglycinamidine cyclo-ligase (348 aa).

The protein belongs to the AIR synthase family.

It localises to the cytoplasm. It carries out the reaction 2-formamido-N(1)-(5-O-phospho-beta-D-ribosyl)acetamidine + ATP = 5-amino-1-(5-phospho-beta-D-ribosyl)imidazole + ADP + phosphate + H(+). The protein operates within purine metabolism; IMP biosynthesis via de novo pathway; 5-amino-1-(5-phospho-D-ribosyl)imidazole from N(2)-formyl-N(1)-(5-phospho-D-ribosyl)glycinamide: step 2/2. The chain is Phosphoribosylformylglycinamidine cyclo-ligase from Cereibacter sphaeroides (strain ATCC 17029 / ATH 2.4.9) (Rhodobacter sphaeroides).